We begin with the raw amino-acid sequence, 179 residues long: Natural killer cells antigen CD94 (179 aa).

Residues 1–10 lie on the Cytoplasmic side of the membrane; sequence MAVSQTTLWN. The helical; Signal-anchor for type II membrane protein transmembrane segment at 11 to 31 threads the bilayer; it reads LISGILGVICLLLMTTMGILL. The Extracellular segment spans residues 32 to 179; it reads KNLLLTESIQ…SRFICKQELM (148 aa). 4 disulfides stabilise this stretch: C58–C70, C61–C72, C89–C174, and C152–C166. A C-type lectin domain is found at 68-175; the sequence is HQCNCYLFFD…CEDKSRFICK (108 aa). N93 and N125 each carry an N-linked (GlcNAc...) asparagine glycan.

Can form disulfide-bonded heterodimer with NKG2 family members KLRC1 and KLRC2. KLRD1-KLRC1 heterodimer interacts with peptide-bound MHC-E-B2M heterotrimeric complex. KLRD1 plays a prominent role in directly interacting with MHC-E. KLRD1-KLRC1 interacts with much higher affinity with peptide-bound MHC-E-B2M than KLRD1-KLRC2. Interacts with the adapter protein TYROBP/DAP12; this interaction is required for cell surface expression and cell activation.

The protein localises to the cell membrane. Its function is as follows. Immune receptor involved in self-nonself discrimination. In complex with KLRC1 or KLRC2 on cytotoxic and regulatory lymphocyte subsets, recognizes non-classical major histocompatibility (MHC) class Ib molecule MHC-E loaded with self-peptides derived from the signal sequence of classical MHC class Ia and non-classical MHC class Ib molecules. Enables cytotoxic cells to monitor the expression of MHC class I molecules in healthy cells and to tolerate self. Primarily functions as a ligand binding subunit as it lacks the capacity to signal. In terms of biological role, KLRD1-KLRC1 acts as an immune inhibitory receptor. Key inhibitory receptor on natural killer (NK) cells that regulates their activation and effector functions. Dominantly counteracts T cell receptor signaling on a subset of memory/effector CD8-positive T cells as part of an antigen-driven response to avoid autoimmunity. On intraepithelial CD8-positive gamma-delta regulatory T cells triggers TGFB1 secretion, which in turn limits the cytotoxic programming of intraepithelial CD8-positive alpha-beta T cells, distinguishing harmless from pathogenic antigens. In MHC-E-rich tumor microenvironment, acts as an immune inhibitory checkpoint and may contribute to progressive loss of effector functions of NK cells and tumor-specific T cells, a state known as cell exhaustion. Upon MHC-E-peptide binding, transmits intracellular signals through KLRC1 immunoreceptor tyrosine-based inhibition motifs (ITIMs) by recruiting INPP5D/SHIP-1 and INPPL1/SHIP-2 tyrosine phosphatases to ITIMs, and ultimately opposing signals transmitted by activating receptors through dephosphorylation of proximal signaling molecules. KLRD1-KLRC2 acts as an immune activating receptor. On cytotoxic lymphocyte subsets recognizes MHC-E loaded with signal sequence-derived peptides from non-classical MHC class Ib MHC-G molecules, likely playing a role in the generation and effector functions of adaptive NK cells and in maternal-fetal tolerance during pregnancy. Regulates the effector functions of terminally differentiated cytotoxic lymphocyte subsets, and in particular may play a role in adaptive NK cell response to viral infection. Upon MHC-E-peptide binding, transmits intracellular signals via the adapter protein TYROBP/DAP12, triggering the phosphorylation of proximal signaling molecules and cell activation. This is Natural killer cells antigen CD94 (KLRD1) from Canis lupus familiaris (Dog).